A 906-amino-acid chain; its full sequence is Peroxisomal hydratase-dehydrogenase-epimerase (906 aa).

Short-chain dehydrogenase like stretches follow at residues aspartate 5 to glutamate 228 and serine 319 to aspartate 532. Isoleucine 13, lysine 52, asparagine 98, and lysine 131 together coordinate NADP(+). Active-site proton donor residues include serine 149 and tyrosine 163. The NADP(+) site is built by tyrosine 163 and lysine 167. Catalysis depends on tyrosine 163, which acts as the Proton acceptor. Catalysis depends on lysine 167, which acts as the Lowers pKa of active site Tyr. The active-site Proton acceptor is the tyrosine 467. A disordered region spans residues alanine 600 to tryptophan 633. A compositionally biased stretch (acidic residues) spans glycine 603 to aspartate 630. Residues histidine 699, glycine 700, lysine 729, tyrosine 757, aspartate 808, asparagine 810, glycine 831, phenylalanine 856, threonine 857, and glycine 858 each coordinate (3R)-3-hydroxydecanoyl-CoA. The MaoC-like domain occupies alanine 782–asparagine 893. The Microbody targeting signal motif lies at alanine 904–isoleucine 906.

Belongs to the short-chain dehydrogenases/reductases (SDR) family. Monomer.

The protein resides in the peroxisome. It catalyses the reaction a (3R)-3-hydroxyacyl-CoA = a (2E)-enoyl-CoA + H2O. The catalysed reaction is a (3R)-3-hydroxyacyl-CoA + NAD(+) = a 3-oxoacyl-CoA + NADH + H(+). It functions in the pathway lipid metabolism; fatty acid beta-oxidation. In terms of biological role, second trifunctional enzyme acting on the beta-oxidation pathway for fatty acids, possessing hydratase-dehydrogenase-epimerase activities. Converts trans-2-enoyl-CoA via D-3-hydroxyacyl-CoA to 3-ketoacyl-CoA. The sequence is that of Peroxisomal hydratase-dehydrogenase-epimerase from Candida tropicalis (Yeast).